The sequence spans 310 residues: Glutaminase 1 (310 aa).

Residues S66, N117, E161, N168, Y192, Y244, and V262 each coordinate substrate. K294 bears the N6-acetyllysine mark.

This sequence belongs to the glutaminase family. In terms of assembly, homotetramer.

The catalysed reaction is L-glutamine + H2O = L-glutamate + NH4(+). This is Glutaminase 1 from Escherichia coli O157:H7.